A 475-amino-acid chain; its full sequence is PRAME family member 20 (475 aa).

Residues 97–124 form an LRR 1; degenerate repeat; it reads RWKLQVLDLQDVSENFWMVWSEAMARRC. The stretch at 179–203 is one LRR 2; degenerate repeat; that stretch reads HLCCKKLKMLGMLFHNIRNILKTVN. One copy of the LRR 3; degenerate repeat lies at 204–230; it reads LDCIQEVEVNCNWTLPVLAEFTPYLGQ. The LRR 4; degenerate repeat unit spans residues 231–265; it reads MRNLRKLVLSDIDSRYISPEQKKEFVTQFTTQFLK. LRR repeat units follow at residues 266–291, 292–323, 324–342, 348–375, and 376–400; these read LRCL…LSCL, KTSL…GQLK, TLDL…PLQV, AATL…ALSR, and CFEL…LLCH.

This sequence belongs to the PRAME family.

This chain is PRAME family member 20, found in Homo sapiens (Human).